A 99-amino-acid chain; its full sequence is NADH-quinone oxidoreductase subunit K (99 aa).

3 helical membrane passes run 3–23 (PANY…GVLL), 28–48 (IVMF…FVTF), and 59–79 (MIAF…LAII).

It belongs to the complex I subunit 4L family. NDH-1 is composed of 14 different subunits. Subunits NuoA, H, J, K, L, M, N constitute the membrane sector of the complex.

The protein localises to the cell membrane. It carries out the reaction a quinone + NADH + 5 H(+)(in) = a quinol + NAD(+) + 4 H(+)(out). Functionally, NDH-1 shuttles electrons from NADH, via FMN and iron-sulfur (Fe-S) centers, to quinones in the respiratory chain. The immediate electron acceptor for the enzyme in this species is believed to be a menaquinone. Couples the redox reaction to proton translocation (for every two electrons transferred, four hydrogen ions are translocated across the cytoplasmic membrane), and thus conserves the redox energy in a proton gradient. This is NADH-quinone oxidoreductase subunit K from Mycobacterium marinum (strain ATCC BAA-535 / M).